The chain runs to 258 residues: Isoprenyl transferase 1 (258 aa).

The active site involves D39. D39 contacts Mg(2+). Substrate contacts are provided by residues G40 to R43, W44, R52, H57, and S85 to D87. The Proton acceptor role is filled by N88. Residues R92, R207, and R213 to S215 each bind substrate. E226 is a Mg(2+) binding site.

It belongs to the UPP synthase family. As to quaternary structure, homodimer. It depends on Mg(2+) as a cofactor.

Catalyzes the condensation of isopentenyl diphosphate (IPP) with allylic pyrophosphates generating different type of terpenoids. The sequence is that of Isoprenyl transferase 1 from Tropheryma whipplei (strain TW08/27) (Whipple's bacillus).